Here is a 415-residue protein sequence, read N- to C-terminus: Gamma-glutamyl phosphate reductase (415 aa).

Belongs to the gamma-glutamyl phosphate reductase family.

It localises to the cytoplasm. The enzyme catalyses L-glutamate 5-semialdehyde + phosphate + NADP(+) = L-glutamyl 5-phosphate + NADPH + H(+). It participates in amino-acid biosynthesis; L-proline biosynthesis; L-glutamate 5-semialdehyde from L-glutamate: step 2/2. Catalyzes the NADPH-dependent reduction of L-glutamate 5-phosphate into L-glutamate 5-semialdehyde and phosphate. The product spontaneously undergoes cyclization to form 1-pyrroline-5-carboxylate. The chain is Gamma-glutamyl phosphate reductase from Oceanobacillus iheyensis (strain DSM 14371 / CIP 107618 / JCM 11309 / KCTC 3954 / HTE831).